The following is a 210-amino-acid chain: Putative protein-lysine deacylase ABHD14B (210 aa).

Ala-2 carries the post-translational modification N-acetylalanine. Residue Ser-91 is modified to Phosphoserine. Residues Ser-111, Asp-162, and His-188 each act as charge relay system in the active site.

The protein belongs to the AB hydrolase superfamily. ABHD14 family. May interact with TAF1.

Its subcellular location is the cytoplasm. The protein localises to the nucleus. The enzyme catalyses L-lysyl-[protein] + acetyl-CoA = N(6)-acetyl-L-lysyl-[protein] + CoA + H(+). Functionally, acts as an atypical protein-lysine deacetylase in vitro. Catalyzes the deacetylation of lysine residues using CoA as substrate, generating acetyl-CoA and the free amine of protein-lysine residues. Additional experiments are however required to confirm the protein-lysine deacetylase activity in vivo. Has hydrolase activity towards various surrogate p-nitrophenyl (pNp) substrates, such as pNp-butyrate, pNp-acetate and pNp-octanoate in vitro, with a strong preference for pNp-acetate. May activate transcription. The protein is Putative protein-lysine deacylase ABHD14B of Pongo abelii (Sumatran orangutan).